The following is a 320-amino-acid chain: Cytochrome c biogenesis protein CcsA (320 aa).

7 helical membrane-spanning segments follow: residues 13-33 (ISFS…FLLV), 46-66 (GMIV…IYSG), 73-93 (LYES…VSYL), 147-167 (MVLG…LLVI), 226-246 (IISL…VWAN), 259-274 (ETWA…IYFH), and 289-309 (VASM…LLGI).

Belongs to the CcmF/CycK/Ccl1/NrfE/CcsA family. May interact with Ccs1.

It localises to the plastid. The protein resides in the chloroplast thylakoid membrane. Its function is as follows. Required during biogenesis of c-type cytochromes (cytochrome c6 and cytochrome f) at the step of heme attachment. The sequence is that of Cytochrome c biogenesis protein CcsA from Gossypium barbadense (Sea Island cotton).